A 167-amino-acid chain; its full sequence is Small ribosomal subunit protein uS5 (167 aa).

Residues 12-75 (LQEKLIAVNR…EKARRNIVTV (64 aa)) enclose the S5 DRBM domain.

This sequence belongs to the universal ribosomal protein uS5 family. Part of the 30S ribosomal subunit. Contacts proteins S4 and S8.

Its function is as follows. With S4 and S12 plays an important role in translational accuracy. Located at the back of the 30S subunit body where it stabilizes the conformation of the head with respect to the body. This chain is Small ribosomal subunit protein uS5, found in Shewanella baltica (strain OS223).